A 461-amino-acid polypeptide reads, in one-letter code: uncharacterized protein (461 aa).

Residues 1 to 19 are compositionally biased toward basic and acidic residues; the sequence is MEKCSHESGRHSAENDGKY. The disordered stretch occupies residues 1 to 21; it reads MEKCSHESGRHSAENDGKYDI.

Belongs to the CapA family.

Functionally, could be involved in the biosynthesis of a cell wall component. This is an uncharacterized protein from Sinorhizobium fredii (strain NBRC 101917 / NGR234).